The following is a 155-amino-acid chain: 17.6 kDa class II heat shock protein (155 aa).

The 118-residue stretch at 38-155 folds into the sHSP domain; it reads DAKAMAATPA…KPKTIQVQVA (118 aa).

Belongs to the small heat shock protein (HSP20) family. As to quaternary structure, may form oligomeric structures.

It localises to the cytoplasm. The sequence is that of 17.6 kDa class II heat shock protein (HSP17.6) from Arabidopsis thaliana (Mouse-ear cress).